The chain runs to 141 residues: Nucleoside diphosphate kinase (141 aa).

ATP-binding residues include lysine 11, phenylalanine 59, arginine 87, threonine 93, arginine 104, and asparagine 114. The active-site Pros-phosphohistidine intermediate is histidine 117.

This sequence belongs to the NDK family. As to quaternary structure, homotetramer. Mg(2+) serves as cofactor.

Its subcellular location is the cytoplasm. The catalysed reaction is a 2'-deoxyribonucleoside 5'-diphosphate + ATP = a 2'-deoxyribonucleoside 5'-triphosphate + ADP. It catalyses the reaction a ribonucleoside 5'-diphosphate + ATP = a ribonucleoside 5'-triphosphate + ADP. Functionally, major role in the synthesis of nucleoside triphosphates other than ATP. The ATP gamma phosphate is transferred to the NDP beta phosphate via a ping-pong mechanism, using a phosphorylated active-site intermediate. This chain is Nucleoside diphosphate kinase, found in Herminiimonas arsenicoxydans.